The chain runs to 507 residues: Proton-coupled zinc antiporter SLC30A1 (507 aa).

Residues 1 to 10 (MGCWGRNRGR) are Cytoplasmic-facing. Residues 11–31 (LLCMLALTFMFMVLEVVVSRV) traverse the membrane as a helical segment. The Extracellular segment spans residues 32-35 (TSSL). Residues 36-56 (AMLSDSFHMLSDVLALVVALV) traverse the membrane as a helical segment. The Zn(2+) site is built by His43 and Asp47. Residues 57-78 (AERFARRTHATQKNTFGWIRAE) lie on the Cytoplasmic side of the membrane. The helical transmembrane segment at 79–99 (VMGALVNAIFLTGLCFAILLE) threads the bilayer. Residues 100–113 (AIERFIEPHEMQQP) lie on the Extracellular side of the membrane. The chain crosses the membrane as a helical span at residues 114–134 (LVVLGVGVAGLLVNVLGLCLF). Over 135–248 (HHHSGFSQDS…RAGQLNMRGV (114 aa)) the chain is Cytoplasmic. Residues 142–217 (QDSGHGHSHG…DPENPRSGDT (76 aa)) are disordered. Positions 146 to 158 (HGHSHGGHGHGHG) are 6 X 2 AA approximate repeats of H-G. Positions 147–167 (GHSHGGHGHGHGLPKGPRVKS) are enriched in basic residues. Residues 189-201 (TNTLVANTSNSNG) show a composition bias toward polar residues. Residues 249–269 (FLHVLGDALGSVIVVVNALVF) traverse the membrane as a helical segment. 2 residues coordinate Zn(2+): His251 and Asp255. The Extracellular segment spans residues 270-308 (YFSWKGCSEGDFCVNPCFPDPCKAFVEIINSTHASVYEA). N-linked (GlcNAc...) asparagine glycosylation is present at Asn299. The chain crosses the membrane as a helical span at residues 309-329 (GPCWVLYLDPTLCVVMVCILL). Residues 330–507 (YTTYPLLKES…MPNKQPESSL (178 aa)) are Cytoplasmic-facing. Ser506 is modified (phosphoserine).

This sequence belongs to the cation diffusion facilitator (CDF) transporter (TC 2.A.4) family. SLC30A subfamily. Homodimer. Interacts with TMEM163. Interacts and forms a complex with TMC6 and TMC8; the interaction regulates zinc transport into the ER. In terms of assembly, (Microbial infection) Interacts with human papillomavirus 16/HPV16 protein E5; the interaction alleviates SLC30A1-mediated transcription factors inhibition. In terms of processing, N-glycosylated at Asn-299. N-glycosylation promotes endocytosis and degradation through the proteasomal or lysosomal pathways.

The protein resides in the cell membrane. It is found in the basolateral cell membrane. The protein localises to the cytoplasmic vesicle membrane. Its subcellular location is the cytoplasm. It localises to the endoplasmic reticulum membrane. The protein resides in the golgi apparatus membrane. It is found in the nucleus membrane. It catalyses the reaction Zn(2+)(in) + 2 H(+)(out) = Zn(2+)(out) + 2 H(+)(in). In terms of biological role, zinc ion:proton antiporter that could function at the plasma membrane mediating zinc efflux from cells against its electrochemical gradient protecting them from intracellular zinc accumulation and toxicity. Alternatively, could prevent the transport to the plasma membrane of CACNB2, the L-type calcium channels regulatory subunit, through a yet to be defined mechanism. By modulating the expression of these channels at the plasma membrane, could prevent calcium and zinc influx into cells. By the same mechanism, could also prevent L-type calcium channels-mediated heavy metal influx into cells. In some cells, could also function as a zinc ion:proton antiporter mediating zinc entry into the lumen of cytoplasmic vesicles. In macrophages, can increase zinc ions concentration into the lumen of cytoplasmic vesicles containing engulfed bacteria and could help inactivate them. Forms a complex with TMC6/EVER1 and TMC8/EVER2 at the ER membrane of keratynocytes which facilitates zinc uptake into the ER. Down-regulates the activity of transcription factors induced by zinc and cytokines. The protein is Proton-coupled zinc antiporter SLC30A1 of Homo sapiens (Human).